The chain runs to 192 residues: GTP cyclohydrolase 1 (192 aa).

Zn(2+) contacts are provided by Cys82, His85, and Cys153.

It belongs to the GTP cyclohydrolase I family. Toroid-shaped homodecamer, composed of two pentamers of five dimers.

It carries out the reaction GTP + H2O = 7,8-dihydroneopterin 3'-triphosphate + formate + H(+). It functions in the pathway cofactor biosynthesis; 7,8-dihydroneopterin triphosphate biosynthesis; 7,8-dihydroneopterin triphosphate from GTP: step 1/1. In Rickettsia bellii (strain OSU 85-389), this protein is GTP cyclohydrolase 1.